The chain runs to 310 residues: p-hydroxybenzoic acid efflux pump subunit AaeA (310 aa).

The helical transmembrane segment at 12–32 (AITVVLVILAFIAIFNAWVYY) threads the bilayer.

Belongs to the membrane fusion protein (MFP) (TC 8.A.1) family.

The protein localises to the cell inner membrane. In terms of biological role, forms an efflux pump with AaeB. This is p-hydroxybenzoic acid efflux pump subunit AaeA from Shigella sonnei (strain Ss046).